Reading from the N-terminus, the 181-residue chain is 3-isopropylmalate dehydratase small subunit (181 aa).

It belongs to the LeuD family. LeuD type 2 subfamily. As to quaternary structure, heterodimer of LeuC and LeuD.

The catalysed reaction is (2R,3S)-3-isopropylmalate = (2S)-2-isopropylmalate. Its pathway is amino-acid biosynthesis; L-leucine biosynthesis; L-leucine from 3-methyl-2-oxobutanoate: step 2/4. In terms of biological role, catalyzes the isomerization between 2-isopropylmalate and 3-isopropylmalate, via the formation of 2-isopropylmaleate. The protein is 3-isopropylmalate dehydratase small subunit of Deinococcus deserti (strain DSM 17065 / CIP 109153 / LMG 22923 / VCD115).